We begin with the raw amino-acid sequence, 204 residues long: MIGRLQGILLEKQPPEILLDVHGIGYELLLPMTSFYNLPEIGQETVLFTHLVVREDAHLLFGFSAKTDRTLFRELIKTNGVGPKLALAILSAMSVNEFAYAIEHEELSKLVKIPGVGKKTAERLLVELKGKFKGIKQPDFFVESSHVGAVDPVTTSPEVPAEEAVAALMALGYKASDAEKMVKRIAKPHLTSEQLIREALKAAL.

The interval 1–64 is domain I; sequence MIGRLQGILL…EDAHLLFGFS (64 aa). The domain II stretch occupies residues 65 to 143; that stretch reads AKTDRTLFRE…GIKQPDFFVE (79 aa). Residues 144–155 are flexible linker; that stretch reads SSHVGAVDPVTT. The domain III stretch occupies residues 156-204; that stretch reads SPEVPAEEAVAALMALGYKASDAEKMVKRIAKPHLTSEQLIREALKAAL.

The protein belongs to the RuvA family. In terms of assembly, homotetramer. Forms an RuvA(8)-RuvB(12)-Holliday junction (HJ) complex. HJ DNA is sandwiched between 2 RuvA tetramers; dsDNA enters through RuvA and exits via RuvB. An RuvB hexamer assembles on each DNA strand where it exits the tetramer. Each RuvB hexamer is contacted by two RuvA subunits (via domain III) on 2 adjacent RuvB subunits; this complex drives branch migration. In the full resolvosome a probable DNA-RuvA(4)-RuvB(12)-RuvC(2) complex forms which resolves the HJ.

It localises to the cytoplasm. Functionally, the RuvA-RuvB-RuvC complex processes Holliday junction (HJ) DNA during genetic recombination and DNA repair, while the RuvA-RuvB complex plays an important role in the rescue of blocked DNA replication forks via replication fork reversal (RFR). RuvA specifically binds to HJ cruciform DNA, conferring on it an open structure. The RuvB hexamer acts as an ATP-dependent pump, pulling dsDNA into and through the RuvAB complex. HJ branch migration allows RuvC to scan DNA until it finds its consensus sequence, where it cleaves and resolves the cruciform DNA. This is Holliday junction branch migration complex subunit RuvA from Mannheimia succiniciproducens (strain KCTC 0769BP / MBEL55E).